Reading from the N-terminus, the 1801-residue chain is U3 small nucleolar RNA-associated protein 10 (1801 aa).

A run of 2 helical transmembrane segments spans residues 102–122 (LALV…EWLI) and 136–156 (ILTF…AILP). The stretch at 581-619 (DVDVQALLPFMLIALADPSERVRSGAVDALANIGKVVDK) is one HEAT 1 repeat. Transmembrane regions (helical) follow at residues 939–959 (IQSG…AIVN) and 995–1015 (ALLL…HSVM). HEAT repeat units lie at residues 1038–1076 (DQTI…AFEH), 1110–1148 (YSMD…DSLK), 1244–1282 (TLTT…QSPE), 1288–1327 (QTRM…KYGK), and 1756–1794 (LALL…VLGE).

It belongs to the HEATR1/UTP10 family. As to quaternary structure, component of the ribosomal small subunit (SSU) processome.

The protein localises to the nucleus. It localises to the nucleolus. The protein resides in the membrane. Its function is as follows. Involved in nucleolar processing of pre-18S ribosomal RNA. Involved in ribosome biosynthesis. This Emericella nidulans (strain FGSC A4 / ATCC 38163 / CBS 112.46 / NRRL 194 / M139) (Aspergillus nidulans) protein is U3 small nucleolar RNA-associated protein 10.